The primary structure comprises 189 residues: Probable chorismate pyruvate-lyase (189 aa).

Positions 74, 113, and 175 each coordinate substrate.

This sequence belongs to the UbiC family.

Its subcellular location is the cytoplasm. It catalyses the reaction chorismate = 4-hydroxybenzoate + pyruvate. Its pathway is cofactor biosynthesis; ubiquinone biosynthesis. In terms of biological role, removes the pyruvyl group from chorismate, with concomitant aromatization of the ring, to provide 4-hydroxybenzoate (4HB) for the ubiquinone pathway. This chain is Probable chorismate pyruvate-lyase, found in Azoarcus sp. (strain BH72).